We begin with the raw amino-acid sequence, 84 residues long: Large ribosomal subunit protein bL31B (84 aa).

Belongs to the bacterial ribosomal protein bL31 family. Type B subfamily. Part of the 50S ribosomal subunit.

The chain is Large ribosomal subunit protein bL31B from Rhodococcus erythropolis (strain PR4 / NBRC 100887).